Consider the following 149-residue polypeptide: Oligosaccharyltransferase complex subunit ostc (149 aa).

Residues 1–32 (METLFSLPFTVLECPNVKLKKPSWLHMPSAMT) are Cytoplasmic-facing. The helical transmembrane segment at 33–53 (VYAVVIVSYFLITGGIIYDVI) threads the bilayer. Residues 54 to 83 (VEPPSVGSMTDEHGHQRPVAFLAYRVNGQY) lie on the Extracellular side of the membrane. The chain crosses the membrane as a helical span at residues 84-104 (IMEGLASSFLFTMGGLGFIIL). The Cytoplasmic segment spans residues 105 to 117 (DRSNAPNIPKLNR). A helical transmembrane segment spans residues 118–138 (FLLLFIGFVSVLLSFFMARVF). At 139–149 (MRMKLPGYLMG) the chain is on the extracellular side.

This sequence belongs to the OSTC family. Specific component of the STT3A-containing form of the oligosaccharyltransferase (OST) complex.

The protein resides in the membrane. It functions in the pathway protein modification; protein glycosylation. Specific component of the STT3A-containing form of the oligosaccharyl transferase (OST) complex that catalyzes the initial transfer of a defined glycan (Glc(3)Man(9)GlcNAc(2) in eukaryotes) from the lipid carrier dolichol-pyrophosphate to an asparagine residue within an Asn-X-Ser/Thr consensus motif in nascent polypeptide chains, the first step in protein N-glycosylation. N-glycosylation occurs cotranslationally and the complex associates with the Sec61 complex at the channel-forming translocon complex that mediates protein translocation across the endoplasmic reticulum (ER). All subunits are required for a maximal enzyme activity. The protein is Oligosaccharyltransferase complex subunit ostc of Danio rerio (Zebrafish).